Reading from the N-terminus, the 225-residue chain is Histone H3-like centromeric protein cid (225 aa).

Positions 1 to 11 (MPRHSRAKRAP) are enriched in basic residues. The disordered stretch occupies residues 1–131 (MPRHSRAKRA…KAANPMSRAK (131 aa)). Positions 43–52 (FTTSQLTLQD) are enriched in polar residues. Phosphoserine is present on residues serine 74 and serine 75. Threonine 76 bears the Phosphothreonine mark. The residue at position 77 (serine 77) is a Phosphoserine. Polar residues predominate over residues 86-103 (RYPTTRSPQTRRMTVQQE). Positions 133–225 (MDREIRRLQH…AYICDRGRQF (93 aa)) are H3-like.

The protein belongs to the histone H3 family. Forms a nucleosome-like histone octamer containing two molecules each of H2A, H2B, cid and H4 assembled in one cid-H4 heterotetramer and two H2A-H2B heterodimers. The cid-H4 heterotetramer is more compact and structurally more rigid than corresponding H3-H4 heterotetramers. Interacts with the condensin subunit Cap-G. Interacts with Chrac-14.

Its subcellular location is the nucleus. It is found in the chromosome. The protein localises to the centromere. The protein resides in the kinetochore. Its function is as follows. Histone H3-like variant which exclusively replaces conventional H3 in the nucleosome core of centromeric chromatin at the inner plate of the kinetochore. Required for recruitment and assembly of kinetochore proteins, mitotic progression and chromosome segregation. May serve as an epigenetic mark that propagates centromere identity through replication and cell division. The polypeptide is Histone H3-like centromeric protein cid (Drosophila melanogaster (Fruit fly)).